A 256-amino-acid polypeptide reads, in one-letter code: DNA polymerase sliding clamp 2 (256 aa).

It belongs to the PCNA family. In terms of assembly, homotrimer. The subunits circularize to form a toroid; DNA passes through its center. Replication factor C (RFC) is required to load the toroid on the DNA.

In terms of biological role, sliding clamp subunit that acts as a moving platform for DNA processing. Responsible for tethering the catalytic subunit of DNA polymerase and other proteins to DNA during high-speed replication. In Pyrobaculum aerophilum (strain ATCC 51768 / DSM 7523 / JCM 9630 / CIP 104966 / NBRC 100827 / IM2), this protein is DNA polymerase sliding clamp 2.